Consider the following 66-residue polypeptide: Large ribosomal subunit protein bL35 (66 aa).

This sequence belongs to the bacterial ribosomal protein bL35 family.

The polypeptide is Large ribosomal subunit protein bL35 (Parvibaculum lavamentivorans (strain DS-1 / DSM 13023 / NCIMB 13966)).